We begin with the raw amino-acid sequence, 349 residues long: Ferredoxin--NADP reductase (349 aa).

FAD is bound by residues Asp35, Gln43, Tyr48, Val88, Phe123, Asp288, and Thr329.

Belongs to the ferredoxin--NADP reductase type 2 family. Homodimer. FAD is required as a cofactor.

The enzyme catalyses 2 reduced [2Fe-2S]-[ferredoxin] + NADP(+) + H(+) = 2 oxidized [2Fe-2S]-[ferredoxin] + NADPH. In Colwellia psychrerythraea (strain 34H / ATCC BAA-681) (Vibrio psychroerythus), this protein is Ferredoxin--NADP reductase.